Reading from the N-terminus, the 1121-residue chain is Ataxin-2 homolog (1121 aa).

Basic residues predominate over residues 1–10 (MNNNSKRKTR). Positions 1–53 (MNNNSKRKTRPSGGGGGGGASGGISRYNANDNSLRPANNKSGAAGNSAGAGAG) are disordered. Positions 12 to 22 (SGGGGGGGASG) are enriched in gly residues. A compositionally biased stretch (polar residues) spans 27 to 36 (YNANDNSLRP). Low complexity predominate over residues 37–47 (ANNKSGAAGNS). The 76-residue stretch at 71-146 (FFMHSATALV…VVKIVAKDFD (76 aa)) folds into the Sm domain. 2 positions are modified to phosphoserine: S219 and S232. Disordered regions lie at residues 270–376 (FAAV…GQGG), 422–458 (GKVM…GGYQ), 476–935 (MHGS…TTGT), and 1039–1076 (QTPQ…TPPT). The span at 274–310 (ERPEQDHRRDGDRERERNDRDREREERDRDRDRDRGN) shows a compositional bias: basic and acidic residues. Residues 323–347 (ETMSSDRYITKQTRGPQMSHVSMSS) show a composition bias toward polar residues. Gly residues-rich tracts occupy residues 367-376 (ISGGGAGQGG) and 434-448 (SGGG…GNGN). Polar residues-rich tracts occupy residues 476 to 487 (MHGSSQYRNPSH) and 499 to 524 (ANAN…NSLN). Low complexity-rich tracts occupy residues 552–596 (PPLQ…PQRQ), 623–684 (PPQQ…MQHQ), 697–711 (QPHY…QPQP), and 720–773 (QQQQ…APEP). A compositionally biased stretch (pro residues) spans 774–789 (SQQPLPLYHPMPPPQT). Composition is skewed to low complexity over residues 807–825 (ILTA…TPKP) and 835–890 (TTTP…STPV). Composition is skewed to pro residues over residues 914-926 (PSRP…PVPM) and 1048-1062 (PGQP…PQPS).

The protein belongs to the ataxin-2 family.

Its subcellular location is the cytoplasm. In terms of biological role, regulator of actin filament formation, though it does not directly assemble with actin filaments. Required for oocyte specification and oocyte positioning in the female germline. Also required for normal eye development and bristle morphology. The chain is Ataxin-2 homolog from Drosophila pseudoobscura pseudoobscura (Fruit fly).